The chain runs to 145 residues: MRAVVQRVDGASVVVEGENGPETVGEINGEGLCVLVGVTHDDTEEKAAQLARKLWSVRMLADEKSCSDIDAPLLVISQFTLYGDARKGRRPTWNAAAPGDVAEPLVDEVVARLRALGATVATGRFGAQMRVSLTNDGPFTVLIEN.

The Gly-cisPro motif, important for rejection of L-amino acids motif lies at 137-138 (GP).

It belongs to the DTD family. Homodimer.

The protein resides in the cytoplasm. The catalysed reaction is glycyl-tRNA(Ala) + H2O = tRNA(Ala) + glycine + H(+). It carries out the reaction a D-aminoacyl-tRNA + H2O = a tRNA + a D-alpha-amino acid + H(+). An aminoacyl-tRNA editing enzyme that deacylates mischarged D-aminoacyl-tRNAs. Also deacylates mischarged glycyl-tRNA(Ala), protecting cells against glycine mischarging by AlaRS. Acts via tRNA-based rather than protein-based catalysis; rejects L-amino acids rather than detecting D-amino acids in the active site. By recycling D-aminoacyl-tRNA to D-amino acids and free tRNA molecules, this enzyme counteracts the toxicity associated with the formation of D-aminoacyl-tRNA entities in vivo and helps enforce protein L-homochirality. In Streptomyces avermitilis (strain ATCC 31267 / DSM 46492 / JCM 5070 / NBRC 14893 / NCIMB 12804 / NRRL 8165 / MA-4680), this protein is D-aminoacyl-tRNA deacylase.